The following is a 743-amino-acid chain: Ovocleidin-116 (743 aa).

An N-terminal signal peptide occupies residues 1–18; sequence MRATLFCLCLCLLGTVLP. Cys31 and Cys42 are joined by a disulfide. N-linked (GlcNAc...) asparagine glycosylation is present at Asn62. Positions 68–225 are disordered; sequence KEEGDHQGTI…GTMGTGDSAI (158 aa). The span at 129 to 141 shows a compositional bias: polar residues; it reads DSNSVYPTSTSVE. The span at 169–179 shows a compositional bias: gly residues; that stretch reads GPHGDGDGGNG. The N-linked (GlcNAc...) asparagine; partial glycan is linked to Asn293. Disordered regions lie at residues 333-356, 385-454, 505-534, 549-577, 628-649, and 692-743; these read GDSV…ATEI, SGKG…GPER, ARTQ…QQEV, RHRA…STGG, DPWV…TVAG, and SGVG…RQSL. The span at 402–420 shows a compositional bias: low complexity; sequence ATMTTRGGRGTASSGLTTG. Residues 421-431 show a composition bias toward polar residues; that stretch reads DCSTAASTPSR. The span at 549 to 558 shows a compositional bias: basic and acidic residues; the sequence is RHRARVRPES.

Belongs to the osteoregulin family. Asn-62 is fully glycosylated, whereas only less than 10% of Asn-293 seem to be glycosylated. In terms of tissue distribution, in the eggshell, expressed mainly in the palisade and mammillary layers. Expression also detected in the hypertrophic zone of the epiphyseal growth plate, and in cortical and medullary bone (at protein level). Highly expressed in uterus. Not detected in the proximal oviduct, liver, magnum, duodenum and kidney.

The protein localises to the secreted. It is found in the extracellular space. Its subcellular location is the extracellular matrix. Functionally, major component of the eggshell matrix. May play an important role in the regulation of calcite growth during eggshell calcification. May also regulate the mineralization process in developing and growing bones. The chain is Ovocleidin-116 from Gallus gallus (Chicken).